Consider the following 147-residue polypeptide: Hemoglobin subunit beta (147 aa).

Valine 2 carries the post-translational modification N-acetylvaline. One can recognise a Globin domain in the interval histidine 3–histidine 147. Threonine 13 carries the post-translational modification Phosphothreonine. Serine 45 carries the post-translational modification Phosphoserine. Lysine 60 carries the post-translational modification N6-acetyllysine. Histidine 64 contacts heme b. At lysine 83 the chain carries N6-acetyllysine. Position 93 (histidine 93) interacts with heme b. Cysteine 94 bears the S-nitrosocysteine mark. Lysine 145 bears the N6-acetyllysine mark.

Belongs to the globin family. Heterotetramer of two alpha chains and two beta chains. In terms of tissue distribution, red blood cells.

Its function is as follows. Involved in oxygen transport from the lung to the various peripheral tissues. This chain is Hemoglobin subunit beta (HBB), found in Tachyglossus aculeatus aculeatus (Southeast Australian short-beaked echidna).